The following is a 423-amino-acid chain: Gamma-glutamyl phosphate reductase (423 aa).

Belongs to the gamma-glutamyl phosphate reductase family.

Its subcellular location is the cytoplasm. The catalysed reaction is L-glutamate 5-semialdehyde + phosphate + NADP(+) = L-glutamyl 5-phosphate + NADPH + H(+). It functions in the pathway amino-acid biosynthesis; L-proline biosynthesis; L-glutamate 5-semialdehyde from L-glutamate: step 2/2. Functionally, catalyzes the NADPH-dependent reduction of L-glutamate 5-phosphate into L-glutamate 5-semialdehyde and phosphate. The product spontaneously undergoes cyclization to form 1-pyrroline-5-carboxylate. The sequence is that of Gamma-glutamyl phosphate reductase from Burkholderia orbicola (strain AU 1054).